The chain runs to 153 residues: MKKILLMLSLLFFTTAGFSEVSDTLVTGGYDKQAMSDAIKHARKETDKFIEVMNKKDADTFAVKAPITDHGRTEHFWLTDVTYSNGMFIGVISNDPGIVTNVEYGQEWKIKKEDISDWMYTRGDKIYGGYTIDPLLVTYPKEEADELRAKLVR.

This is an uncharacterized protein from Escherichia coli (strain K12).